The sequence spans 62 residues: Photosystem II reaction center protein Z (62 aa).

2 helical membrane passes run 8–28 and 41–61; these read ALFA…VVLA and FSGI…NSFV.

It belongs to the PsbZ family. PSII is composed of 1 copy each of membrane proteins PsbA, PsbB, PsbC, PsbD, PsbE, PsbF, PsbH, PsbI, PsbJ, PsbK, PsbL, PsbM, PsbT, PsbY, PsbZ, Psb30/Ycf12, at least 3 peripheral proteins of the oxygen-evolving complex and a large number of cofactors. It forms dimeric complexes.

Its subcellular location is the plastid. The protein localises to the chloroplast thylakoid membrane. Its function is as follows. May control the interaction of photosystem II (PSII) cores with the light-harvesting antenna, regulates electron flow through the 2 photosystem reaction centers. PSII is a light-driven water plastoquinone oxidoreductase, using light energy to abstract electrons from H(2)O, generating a proton gradient subsequently used for ATP formation. The polypeptide is Photosystem II reaction center protein Z (Chlorella vulgaris (Green alga)).